A 383-amino-acid chain; its full sequence is Chaperone protein DnaJ (383 aa).

The region spanning 6–70 is the J domain; sequence DYYDVLGVGR…QKRAAYDQYG (65 aa). The CR-type zinc finger occupies 140–222; that stretch reads GKETKISYSR…CHGTGREEER (83 aa). 8 residues coordinate Zn(2+): Cys-153, Cys-156, Cys-170, Cys-173, Cys-196, Cys-199, Cys-210, and Cys-213. 4 CXXCXGXG motif repeats span residues 153-160, 170-177, 196-203, and 210-217; these read CHTCHGSG, CHKCHGAG, CDVCGGTG, and CDTCHGTG.

It belongs to the DnaJ family. As to quaternary structure, homodimer. It depends on Zn(2+) as a cofactor.

It localises to the cytoplasm. Participates actively in the response to hyperosmotic and heat shock by preventing the aggregation of stress-denatured proteins and by disaggregating proteins, also in an autonomous, DnaK-independent fashion. Unfolded proteins bind initially to DnaJ; upon interaction with the DnaJ-bound protein, DnaK hydrolyzes its bound ATP, resulting in the formation of a stable complex. GrpE releases ADP from DnaK; ATP binding to DnaK triggers the release of the substrate protein, thus completing the reaction cycle. Several rounds of ATP-dependent interactions between DnaJ, DnaK and GrpE are required for fully efficient folding. Also involved, together with DnaK and GrpE, in the DNA replication of plasmids through activation of initiation proteins. In Latilactobacillus sakei subsp. sakei (strain 23K) (Lactobacillus sakei subsp. sakei), this protein is Chaperone protein DnaJ.